The primary structure comprises 412 residues: Peptidase T (412 aa).

Zn(2+) is bound at residue H81. The active site involves D83. D144 is a Zn(2+) binding site. Residue E178 is the Proton acceptor of the active site. Residues E179, D201, and H383 each contribute to the Zn(2+) site.

The protein belongs to the peptidase M20B family. Zn(2+) serves as cofactor.

It localises to the cytoplasm. It carries out the reaction Release of the N-terminal residue from a tripeptide.. Cleaves the N-terminal amino acid of tripeptides. This is Peptidase T from Bacillus cereus (strain ZK / E33L).